The primary structure comprises 194 residues: Crossover junction endodeoxyribonuclease RuvC (194 aa).

Active-site residues include aspartate 8, glutamate 72, and aspartate 144. Aspartate 8, glutamate 72, and aspartate 144 together coordinate Mg(2+).

Belongs to the RuvC family. In terms of assembly, homodimer which binds Holliday junction (HJ) DNA. The HJ becomes 2-fold symmetrical on binding to RuvC with unstacked arms; it has a different conformation from HJ DNA in complex with RuvA. In the full resolvosome a probable DNA-RuvA(4)-RuvB(12)-RuvC(2) complex forms which resolves the HJ. It depends on Mg(2+) as a cofactor.

It localises to the cytoplasm. The enzyme catalyses Endonucleolytic cleavage at a junction such as a reciprocal single-stranded crossover between two homologous DNA duplexes (Holliday junction).. The RuvA-RuvB-RuvC complex processes Holliday junction (HJ) DNA during genetic recombination and DNA repair. Endonuclease that resolves HJ intermediates. Cleaves cruciform DNA by making single-stranded nicks across the HJ at symmetrical positions within the homologous arms, yielding a 5'-phosphate and a 3'-hydroxyl group; requires a central core of homology in the junction. The consensus cleavage sequence is 5'-(A/T)TT(C/G)-3'. Cleavage occurs on the 3'-side of the TT dinucleotide at the point of strand exchange. HJ branch migration catalyzed by RuvA-RuvB allows RuvC to scan DNA until it finds its consensus sequence, where it cleaves and resolves the cruciform DNA. The chain is Crossover junction endodeoxyribonuclease RuvC from Psychrobacter sp. (strain PRwf-1).